The chain runs to 348 residues: D-erythrose-4-phosphate dehydrogenase (348 aa).

Residues 12 to 13 and arginine 81 each bind NAD(+); that span reads RI. Residues 154 to 156, arginine 200, 213 to 214, and arginine 236 contribute to the substrate site; these read SCT and TK. Cysteine 155 (nucleophile) is an active-site residue. Asparagine 318 contributes to the NAD(+) binding site.

The protein belongs to the glyceraldehyde-3-phosphate dehydrogenase family. Epd subfamily. In terms of assembly, homotetramer.

It localises to the cytoplasm. It catalyses the reaction D-erythrose 4-phosphate + NAD(+) + H2O = 4-phospho-D-erythronate + NADH + 2 H(+). It participates in cofactor biosynthesis; pyridoxine 5'-phosphate biosynthesis; pyridoxine 5'-phosphate from D-erythrose 4-phosphate: step 1/5. In terms of biological role, catalyzes the NAD-dependent conversion of D-erythrose 4-phosphate to 4-phosphoerythronate. In Salmonella paratyphi A (strain ATCC 9150 / SARB42), this protein is D-erythrose-4-phosphate dehydrogenase.